Reading from the N-terminus, the 177-residue chain is Ribosome maturation factor RimM (177 aa).

A PRC barrel domain is found at 101 to 174 (EGEFHLLDLV…WLLLTPPPGL (74 aa)).

It belongs to the RimM family. Binds ribosomal protein uS19.

The protein localises to the cytoplasm. An accessory protein needed during the final step in the assembly of 30S ribosomal subunit, possibly for assembly of the head region. Essential for efficient processing of 16S rRNA. May be needed both before and after RbfA during the maturation of 16S rRNA. It has affinity for free ribosomal 30S subunits but not for 70S ribosomes. This chain is Ribosome maturation factor RimM, found in Synechococcus sp. (strain CC9605).